A 304-amino-acid polypeptide reads, in one-letter code: MDLSVLDRLKWLQQQQMVSPEFLQILGSDGREELKRVESYLGNNNDELQSFRHFPEFGPDYDTTDGCISRTSSFHMEPVKNNGHSRAITLQNKRKPEGKTEKREKKKIKAEDETEPSMKGKSNMSNTETSSEIQKPDYIHVRARRGEATDRHSLAERARREKISKKMKCLQDIVPGCNKVTGKAGMLDEIINYVQSLQQQVEFLSMKLSVINPELECHIDDLSAKQFQAYFTGPPEGDSKQSIMADFRSFPLHQQGSLDYSVINSDHTTSLGAKDHTSSSWETHSQCLYNSLRTDSVSNFFSLK.

The disordered stretch occupies residues F74 to E132. The segment covering N82–Q91 has biased composition (polar residues). Basic and acidic residues predominate over residues R94 to R103. Residues G120–E132 show a composition bias toward polar residues. One can recognise a bHLH domain in the interval E147–L197.

As to quaternary structure, homodimer. As to expression, expressed in stems and flowers.

It is found in the nucleus. Positive regulator of brassinosteroid signaling. The chain is Transcription factor BEE 2 (BEE2) from Arabidopsis thaliana (Mouse-ear cress).